Consider the following 1220-residue polypeptide: DNA-directed RNA polymerase subunit beta' (1220 aa).

Zn(2+)-binding residues include Cys-60, Cys-62, Cys-75, and Cys-78. Asp-449, Asp-451, and Asp-453 together coordinate Mg(2+). Residues Cys-818, Cys-892, Cys-899, and Cys-902 each coordinate Zn(2+).

The protein belongs to the RNA polymerase beta' chain family. The RNAP catalytic core consists of 2 alpha, 1 beta, 1 beta' and 1 omega subunit. When a sigma factor is associated with the core the holoenzyme is formed, which can initiate transcription. It depends on Mg(2+) as a cofactor. Zn(2+) is required as a cofactor.

The catalysed reaction is RNA(n) + a ribonucleoside 5'-triphosphate = RNA(n+1) + diphosphate. In terms of biological role, DNA-dependent RNA polymerase catalyzes the transcription of DNA into RNA using the four ribonucleoside triphosphates as substrates. The protein is DNA-directed RNA polymerase subunit beta' of Lacticaseibacillus paracasei (strain ATCC 334 / BCRC 17002 / CCUG 31169 / CIP 107868 / KCTC 3260 / NRRL B-441) (Lactobacillus paracasei).